Here is a 259-residue protein sequence, read N- to C-terminus: Small ribosomal subunit protein eS4 (259 aa).

The S4 RNA-binding domain maps to 41–105; the sequence is LPLSVLLKER…TDQSFRILYD (65 aa). Thr-248 is modified (phosphothreonine). The residue at position 258 (Ser-258) is a Phosphoserine.

It belongs to the eukaryotic ribosomal protein eS4 family.

The sequence is that of Small ribosomal subunit protein eS4 from Tetrahymena thermophila.